Here is an 854-residue protein sequence, read N- to C-terminus: DNA mismatch repair protein MutS (854 aa).

614 to 621 contacts ATP; sequence GPNMGGKS.

The protein belongs to the DNA mismatch repair MutS family.

This protein is involved in the repair of mismatches in DNA. It is possible that it carries out the mismatch recognition step. This protein has a weak ATPase activity. The sequence is that of DNA mismatch repair protein MutS from Yersinia pestis bv. Antiqua (strain Antiqua).